Here is a 586-residue protein sequence, read N- to C-terminus: MDDELRERVRRAAERAALFNALKHGSDAQVGAIMGPMMGEHPDFRAHGDEIPGVIAPVIEDVNGMSDDEQRARLAELAPEDVEELDSEDEGDDHALPALPNAEAYDEVRMRCAPNPNGPWHVGHARMPSVIGTYKQRYDGSFVVRFDDTDPETKRPDLDAYDQILEDLSYLGFEADEVLTASDRVETYYEHARRLIGMGGAYTCSCPGAEFSDLKNSGEACPHRDKDPETVADEFEAMVDGEYNSGEMVLRVKTDITHKNPALRDWVAFRMVDTPHPRDAASGYRCWPMLDFQSGVDDHRTGVTHIIRGIDLQDSAKRQRFLYEYFGWEYPEVVHWGHVQLDAYDVAMSTSTIKERIAAGELEGWDDPRAPTMQSIRRRGIRGAAVVDAMVELGTSSSDVELAMSAVYANNRDLVDDTAPRQFLVRDGFEARGEGPEESHEAVEVPVDDGPDEATPQVHPEHPDRGDREIPVGERVLVEATDLPAAGDRVWLKGYGPVRYDGERFAFLDADIDIVREEGVDVVQWVPAEHNVDVRLRTMDGDVTGYAEPGFADRDADEIVQFVRVGFARVDAHRDGGASVAYFTHP.

Positions 114-124 (PNPNGPWHVGH) match the 'HIGH' region motif. Basic and acidic residues-rich tracts occupy residues 431 to 443 (ARGEGPEESHEAV) and 459 to 468 (HPEHPDRGDR). Residues 431-468 (ARGEGPEESHEAVEVPVDDGPDEATPQVHPEHPDRGDR) are disordered.

This sequence belongs to the class-I aminoacyl-tRNA synthetase family. Glutamate--tRNA ligase type 2 subfamily.

The protein resides in the cytoplasm. The catalysed reaction is tRNA(Glu) + L-glutamate + ATP = L-glutamyl-tRNA(Glu) + AMP + diphosphate. Catalyzes the attachment of glutamate to tRNA(Glu) in a two-step reaction: glutamate is first activated by ATP to form Glu-AMP and then transferred to the acceptor end of tRNA(Glu). This Halobacterium salinarum (strain ATCC 29341 / DSM 671 / R1) protein is Glutamate--tRNA ligase.